The sequence spans 516 residues: Golgi-associated kinase 1B (516 aa).

Residues 1–37 are Cytoplasmic-facing; sequence MTCPDKLGQLINWFVCSLCAPRVCKLWSSRRPRTRRN. Residues 38–55 traverse the membrane as a helical; Signal-anchor for type II membrane protein segment; sequence LLLGTACAIYLGFLVSQV. Residues 56–516 are Extracellular-facing; sequence GKGSFQHGQA…HGARVLPMNE (461 aa). A glycan (N-linked (GlcNAc...) asparagine) is linked at asparagine 286.

The protein belongs to the GASK family.

It is found in the golgi apparatus membrane. In Rattus norvegicus (Rat), this protein is Golgi-associated kinase 1B.